Reading from the N-terminus, the 299-residue chain is Single myb histone 1 (299 aa).

An HTH myb-type domain is found at 1 to 61 (MGAPKQRWTP…KWRNLSVTAG (61 aa)). Positions 28-57 (WRTILRDSDFSALLRLRSNVDLKDKWRNLS) form a DNA-binding region, H-T-H motif. Positions 124 to 192 (SVARLDDLIL…KVNQKYRIAP (69 aa)) constitute an H15 domain. Residues 238-279 (EEAAAFAAKAVAEAEVAIAEAEEAARVAEAAENDAEAAKAFL) are a coiled coil.

It belongs to the histone H1/H5 family. SMH subfamily. In terms of assembly, forms a homodimer and heterodimers. As to expression, expressed in leaves.

It localises to the nucleus. The protein localises to the chromosome. Its subcellular location is the nucleolus. It is found in the telomere. Its function is as follows. Binds preferentially double-stranded telomeric repeats 5'-TTTAGGG-3', but can also bind to the single G-rich and C-rich telomeric strand. The sequence is that of Single myb histone 1 (SMH1) from Zea mays (Maize).